A 270-amino-acid chain; its full sequence is F420 non-reducing hydrogenase II cytochrome subunit (270 aa).

Transmembrane regions (helical) follow at residues 27-47, 57-77, 139-159, 173-193, and 195-215; these read AIAM…WEFM, MIAV…NIFS, ILIP…IVLY, WIIS…VGFL, and VLHL…VGIL.

Belongs to the HupC/HyaC/HydC family. In terms of assembly, composed of a large subunit (VhtA), a small subunit (VhtG) and a cytochrome subunit (VhtC). The cofactor is heme b.

It is found in the cell membrane. It catalyses the reaction methanophenazine + H2 = dihydromethanophenazine. Part of the F420 non-reducing hydrogenase II complex that catalyzes the reduction of methanophenazine to dihydromethanophenazine. The protein is F420 non-reducing hydrogenase II cytochrome subunit of Methanosarcina mazei (strain ATCC BAA-159 / DSM 3647 / Goe1 / Go1 / JCM 11833 / OCM 88) (Methanosarcina frisia).